Reading from the N-terminus, the 466-residue chain is Endoglucanase E-5 (466 aa).

The N-terminal stretch at 1 to 36 (MAKSPAARKGXPPVAVAVTAALALLIALLSPGVAQA) is a signal peptide. One can recognise a CBM2 domain in the interval 37–139 (AGLTATVTKE…TINGAPCDEG (103 aa)). Residues 129-166 (CTINGAPCDEGSEPGGPGGPGTPSPDPGTQPGTGTPVE) are disordered. Glu-299 serves as the catalytic Proton donor. Glu-391 serves as the catalytic Nucleophile.

Belongs to the glycosyl hydrolase 5 (cellulase A) family.

It carries out the reaction Endohydrolysis of (1-&gt;4)-beta-D-glucosidic linkages in cellulose, lichenin and cereal beta-D-glucans.. It participates in glycan metabolism; cellulose degradation. This is Endoglucanase E-5 (celE) from Thermobifida fusca (Thermomonospora fusca).